Here is a 372-residue protein sequence, read N- to C-terminus: Lipoyl synthase, mitochondrial (372 aa).

A mitochondrion-targeting transit peptide spans 1–27 (MSLRCGGAVRTVGPRVFGRYVFSPVRE). The [4Fe-4S] cluster site is built by cysteine 106, cysteine 111, cysteine 117, cysteine 137, cysteine 141, cysteine 144, and serine 352. A Radical SAM core domain is found at 122–341 (EYATATATIM…EKVGNELGFH (220 aa)).

It belongs to the radical SAM superfamily. Lipoyl synthase family. [4Fe-4S] cluster serves as cofactor.

It localises to the mitochondrion. It carries out the reaction [[Fe-S] cluster scaffold protein carrying a second [4Fe-4S](2+) cluster] + N(6)-octanoyl-L-lysyl-[protein] + 2 oxidized [2Fe-2S]-[ferredoxin] + 2 S-adenosyl-L-methionine + 4 H(+) = [[Fe-S] cluster scaffold protein] + N(6)-[(R)-dihydrolipoyl]-L-lysyl-[protein] + 4 Fe(3+) + 2 hydrogen sulfide + 2 5'-deoxyadenosine + 2 L-methionine + 2 reduced [2Fe-2S]-[ferredoxin]. Its pathway is protein modification; protein lipoylation via endogenous pathway; protein N(6)-(lipoyl)lysine from octanoyl-[acyl-carrier-protein]: step 2/2. Functionally, catalyzes the radical-mediated insertion of two sulfur atoms into the C-6 and C-8 positions of the octanoyl moiety bound to the lipoyl domains of lipoate-dependent enzymes, thereby converting the octanoylated domains into lipoylated derivatives. This Bos taurus (Bovine) protein is Lipoyl synthase, mitochondrial.